The chain runs to 329 residues: NADH-quinone oxidoreductase subunit H 2 (329 aa).

Transmembrane regions (helical) follow at residues 12–32, 78–98, 120–140, 159–179, 191–211, 242–262, 270–290, and 309–329; these read GAKI…LVFA, WLFY…FAVI, VGLL…ALGG, LISY…LAGS, GVWF…SIAA, LFFV…TTFF, LLPP…FFIW, and KVLT…LMFV.

This sequence belongs to the complex I subunit 1 family. As to quaternary structure, NDH-1 is composed of 14 different subunits. Subunits NuoA, H, J, K, L, M, N constitute the membrane sector of the complex.

The protein resides in the cell inner membrane. It catalyses the reaction a quinone + NADH + 5 H(+)(in) = a quinol + NAD(+) + 4 H(+)(out). In terms of biological role, NDH-1 shuttles electrons from NADH, via FMN and iron-sulfur (Fe-S) centers, to quinones in the respiratory chain. The immediate electron acceptor for the enzyme in this species is believed to be ubiquinone. Couples the redox reaction to proton translocation (for every two electrons transferred, four hydrogen ions are translocated across the cytoplasmic membrane), and thus conserves the redox energy in a proton gradient. This subunit may bind ubiquinone. The sequence is that of NADH-quinone oxidoreductase subunit H 2 from Geobacter sulfurreducens (strain ATCC 51573 / DSM 12127 / PCA).